Consider the following 152-residue polypeptide: 3-hydroxyacyl-[acyl-carrier-protein] dehydratase FabZ (152 aa).

Residue His-58 is part of the active site.

It belongs to the thioester dehydratase family. FabZ subfamily.

Its subcellular location is the cytoplasm. The catalysed reaction is a (3R)-hydroxyacyl-[ACP] = a (2E)-enoyl-[ACP] + H2O. Functionally, involved in unsaturated fatty acids biosynthesis. Catalyzes the dehydration of short chain beta-hydroxyacyl-ACPs and long chain saturated and unsaturated beta-hydroxyacyl-ACPs. The polypeptide is 3-hydroxyacyl-[acyl-carrier-protein] dehydratase FabZ (Prochlorococcus marinus (strain MIT 9515)).